A 370-amino-acid chain; its full sequence is GTPase Obg (370 aa).

In terms of domain architecture, Obg spans 1–159; that stretch reads MKFIDEARIE…RMVRLELKVL (159 aa). The tract at residues 127 to 147 is disordered; that stretch reads NLHFKSSTNRAPRQKTDGKPG. One can recognise an OBG-type G domain in the interval 160–334; that stretch reads ADVGLLGMPN…LCYAVYDYLA (175 aa). GTP contacts are provided by residues 166–173, 191–195, 213–216, 284–287, and 315–317; these read GMPNAGKS, FTTLA, DIPG, NKLD, and SAL. Residues serine 173 and threonine 193 each contribute to the Mg(2+) site.

It belongs to the TRAFAC class OBG-HflX-like GTPase superfamily. OBG GTPase family. Monomer. Mg(2+) is required as a cofactor.

The protein resides in the cytoplasm. Its function is as follows. An essential GTPase which binds GTP, GDP and possibly (p)ppGpp with moderate affinity, with high nucleotide exchange rates and a fairly low GTP hydrolysis rate. Plays a role in control of the cell cycle, stress response, ribosome biogenesis and in those bacteria that undergo differentiation, in morphogenesis control. In Paraburkholderia phymatum (strain DSM 17167 / CIP 108236 / LMG 21445 / STM815) (Burkholderia phymatum), this protein is GTPase Obg.